A 354-amino-acid chain; its full sequence is S-adenosylmethionine:tRNA ribosyltransferase-isomerase (354 aa).

It belongs to the QueA family. In terms of assembly, monomer.

It localises to the cytoplasm. The catalysed reaction is 7-aminomethyl-7-carbaguanosine(34) in tRNA + S-adenosyl-L-methionine = epoxyqueuosine(34) in tRNA + adenine + L-methionine + 2 H(+). It participates in tRNA modification; tRNA-queuosine biosynthesis. Its function is as follows. Transfers and isomerizes the ribose moiety from AdoMet to the 7-aminomethyl group of 7-deazaguanine (preQ1-tRNA) to give epoxyqueuosine (oQ-tRNA). The chain is S-adenosylmethionine:tRNA ribosyltransferase-isomerase from Thermosynechococcus vestitus (strain NIES-2133 / IAM M-273 / BP-1).